The sequence spans 92 residues: uncharacterized protein (92 aa).

The 66-residue stretch at 24–89 (KQIVLKVKEM…AIHKLKYTAE (66 aa)) folds into the HMA domain. Residues Cys-35 and Cys-38 each contribute to the a metal cation site.

This is an uncharacterized protein from Haemophilus influenzae (strain ATCC 51907 / DSM 11121 / KW20 / Rd).